We begin with the raw amino-acid sequence, 186 residues long: Interferon lambda-3 (186 aa).

Positions 1-21 (MVCYGVTIILVGTLGSLLVGA) are cleaved as a signal peptide. 3 cysteine pairs are disulfide-bonded: cysteine 31–cysteine 128, cysteine 65–cysteine 160, and cysteine 178–cysteine 185.

Belongs to the lambda interferon family.

The protein resides in the secreted. In terms of biological role, cytokine which plays a critical role in the antiviral host defense, predominantly in the epithelial tissues. Acts as a ligand for the heterodimeric class II cytokine receptor composed of IL10RB and IFNLR1, and receptor engagement leads to the activation of the JAK/STAT signaling pathway resulting in the expression of IFN-stimulated genes (ISG), which mediate the antiviral state. Has a restricted receptor distribution and therefore restricted targets: is primarily active in epithelial cells and this cell type-selective action is because of the epithelial cell-specific expression of its receptor IFNLR1. Exhibits antiviral activity against the H5N1 influenza A virus. Induces the expression of the antiviral MX protein in epithelial-rich tissues, such as intestine, trachea and lung. The sequence is that of Interferon lambda-3 (IFNL3) from Gallus gallus (Chicken).